Here is a 334-residue protein sequence, read N- to C-terminus: tRNA uridine(34) hydroxylase (334 aa).

A Rhodanese domain is found at 123–217; it reads SDPDVILVDT…YLEEVKAEES (95 aa). Catalysis depends on C177, which acts as the Cysteine persulfide intermediate.

The protein belongs to the TrhO family.

It catalyses the reaction uridine(34) in tRNA + AH2 + O2 = 5-hydroxyuridine(34) in tRNA + A + H2O. In terms of biological role, catalyzes oxygen-dependent 5-hydroxyuridine (ho5U) modification at position 34 in tRNAs. This is tRNA uridine(34) hydroxylase from Shewanella baltica (strain OS195).